Reading from the N-terminus, the 238-residue chain is Pyridoxine 5'-phosphate synthase (238 aa).

Asparagine 7 is a binding site for 3-amino-2-oxopropyl phosphate. 1-deoxy-D-xylulose 5-phosphate is bound at residue aspartate 9–histidine 10. Arginine 18 provides a ligand contact to 3-amino-2-oxopropyl phosphate. Histidine 43 serves as the catalytic Proton acceptor. The 1-deoxy-D-xylulose 5-phosphate site is built by arginine 45 and histidine 50. Glutamate 70 functions as the Proton acceptor in the catalytic mechanism. Position 100 (threonine 100) interacts with 1-deoxy-D-xylulose 5-phosphate. Residue histidine 190 is the Proton donor of the active site. Residues glycine 191 and glycine 212–histidine 213 contribute to the 3-amino-2-oxopropyl phosphate site.

This sequence belongs to the PNP synthase family. Homooctamer; tetramer of dimers.

Its subcellular location is the cytoplasm. The catalysed reaction is 3-amino-2-oxopropyl phosphate + 1-deoxy-D-xylulose 5-phosphate = pyridoxine 5'-phosphate + phosphate + 2 H2O + H(+). The protein operates within cofactor biosynthesis; pyridoxine 5'-phosphate biosynthesis; pyridoxine 5'-phosphate from D-erythrose 4-phosphate: step 5/5. Functionally, catalyzes the complicated ring closure reaction between the two acyclic compounds 1-deoxy-D-xylulose-5-phosphate (DXP) and 3-amino-2-oxopropyl phosphate (1-amino-acetone-3-phosphate or AAP) to form pyridoxine 5'-phosphate (PNP) and inorganic phosphate. This Prochlorococcus marinus (strain MIT 9215) protein is Pyridoxine 5'-phosphate synthase.